Here is a 425-residue protein sequence, read N- to C-terminus: UPF0229 protein YE2273 (425 aa).

Residues 84–110 are disordered; that stretch reads TNDRIERPQGGGGGSGSGQGNAGQDGE. Residues 92-108 show a composition bias toward gly residues; that stretch reads QGGGGGSGSGQGNAGQD.

Belongs to the UPF0229 family.

The protein is UPF0229 protein YE2273 of Yersinia enterocolitica serotype O:8 / biotype 1B (strain NCTC 13174 / 8081).